The following is a 370-amino-acid chain: Peptide chain release factor 1 (370 aa).

Gln231 is modified (N5-methylglutamine). Residues 284-293 show a composition bias toward basic and acidic residues; that stretch reads AREERERETR. The segment at 284–303 is disordered; that stretch reads AREERERETRAAQVGTGERS.

The protein belongs to the prokaryotic/mitochondrial release factor family. Methylated by PrmC. Methylation increases the termination efficiency of RF1.

It localises to the cytoplasm. Functionally, peptide chain release factor 1 directs the termination of translation in response to the peptide chain termination codons UAG and UAA. This is Peptide chain release factor 1 from Deinococcus geothermalis (strain DSM 11300 / CIP 105573 / AG-3a).